Reading from the N-terminus, the 300-residue chain is Acetylglutamate kinase (300 aa).

Residues 73-74 (GG), arginine 95, and asparagine 197 each bind substrate.

This sequence belongs to the acetylglutamate kinase family. ArgB subfamily.

It is found in the cytoplasm. The catalysed reaction is N-acetyl-L-glutamate + ATP = N-acetyl-L-glutamyl 5-phosphate + ADP. It participates in amino-acid biosynthesis; L-arginine biosynthesis; N(2)-acetyl-L-ornithine from L-glutamate: step 2/4. Functionally, catalyzes the ATP-dependent phosphorylation of N-acetyl-L-glutamate. The sequence is that of Acetylglutamate kinase from Bordetella bronchiseptica (strain ATCC BAA-588 / NCTC 13252 / RB50) (Alcaligenes bronchisepticus).